Reading from the N-terminus, the 358-residue chain is METLCHRLNVCQEKILDCYELDSDKLVDQINYWTLLRYEAAMFYAARERNLRTINHQVVPATTVSKQKACQAIEMHMALQSLNKSDYNMEPWTMRETCYELWCVAPKQCFKKGGITVTVIFDGNKDNAMDYTSWKFIYIYDNDKWVKTNGNVDYTGIYYTVNSKKEYYVQFKDEAKIYGAQQWEVYMYGTVITCPEYVSSTCSDALSTTTTVEQLSNTPTTNPLTTCVGAKEAQTQQRKRQRLTEPDSSTISPLSVDNTNNQIHCGSGSTNTGGHQSATQTAFIVHLKGDTNCLKCFRYRFTKHKGLYKNVSSTWHWTSNTKTGIVTIVFDSAHQRETFIKTIKVPPSVTLSLGIMTL.

Positions 1-199 (METLCHRLNV…TVITCPEYVS (199 aa)) are transactivation domain. The disordered stretch occupies residues 224-255 (LTTCVGAKEAQTQQRKRQRLTEPDSSTISPLS). The segment covering 246 to 255 (PDSSTISPLS) has biased composition (polar residues). Residues 281 to 358 (TAFIVHLKGD…VTLSLGIMTL (78 aa)) are DNA-binding domain. A Glycyl lysine isopeptide (Lys-Gly) (interchain with G-Cter in SUMO) cross-link involves residue Lys288.

It belongs to the papillomaviridae E2 protein family. Binds DNA as homodimer. Interacts with protein E1; this interaction greatly increases E1 DNA-binding activity. Interacts with protein L1; this interaction enhances E2-dependent replication and transcription activation. Interacts with protein L2; this interaction inhibits E2 transcriptional activity but not DNA replication function E2. Interacts with protein E7; this interaction inhibits E7 oncogenic activity. Interacts with host TAF1; this interaction modulates E2-dependent transcriptional regulation. Interacts with host BRD4; this interaction mediates E2 transcriptional activation function. Additionally, the interaction with host BRD4 on mitotic chromosomes mediates tethering of the viral genome. Interacts with host TOPBP1; this interaction is required for optimal viral DNA replication. Post-translationally, phosphorylated. In terms of processing, sumoylation plays a regulatory role in E2 transcriptional activity.

The protein resides in the host nucleus. Functionally, plays a role in the initiation of viral DNA replication. A dimer of E2 interacts with a dimer of E1 in order to improve specificity of E1 DNA binding activity. Once the complex recognizes and binds DNA at specific sites, the E2 dimer is removed from DNA. E2 also regulates viral transcription through binding to the E2RE response element (5'-ACCNNNNNNGGT-3') present in multiple copies in the regulatory regions of the viral genome. Activates or represses transcription depending on E2RE's position with regards to proximal promoter elements including the TATA-box. Repression occurs by sterically hindering the assembly of the transcription initiation complex. The protein is Regulatory protein E2 of Human papillomavirus 51.